Here is a 490-residue protein sequence, read N- to C-terminus: Protoporphyrinogen oxidase (490 aa).

Residues 7 to 12, 32 to 33, Trp-40, 61 to 64, and 466 to 468 each bind FAD; these read GGGIAG, EK, GPRT, and VSI.

This sequence belongs to the protoporphyrinogen/coproporphyrinogen oxidase family. Protoporphyrinogen oxidase subfamily. Requires FAD as cofactor.

The protein resides in the mitochondrion. It catalyses the reaction protoporphyrinogen IX + 3 O2 = protoporphyrin IX + 3 H2O2. Its pathway is porphyrin-containing compound metabolism; protoporphyrin-IX biosynthesis; protoporphyrin-IX from protoporphyrinogen-IX: step 1/1. Functionally, catalyzes the 6-electron oxidation of protoporphyrinogen-IX to form protoporphyrin-IX. This chain is Protoporphyrinogen oxidase (hem14), found in Schizosaccharomyces pombe (strain 972 / ATCC 24843) (Fission yeast).